The chain runs to 435 residues: MRNTAMKAQWTDFITLLKREVVPALGCTEPMSVALAAANCRKLLGQTPTRVSVWVSGNLFKNGMGVGVPGTGMIGLPVAAAVGFTGGNPDAGLEVLNTLTPAQVEEAKALLPIIKVDVKDVPDVLYAEVLAEVEGHSARVVICTDHTRIVLMELDGEVLMEQNSAPGVQIQPAKSDKPAMTLREIVAFALEVPLAEIDFIGAAATMNQALADEGLQGYGLRIGKILTEQVERKLLSDDLMTLAMRLSSAASDARMDGAMLPAMSNSGSGNQGIAATMPVVAAARFLKASDEQLTRALVMSHLVAIYIKTHQNKLSALCAASTAAMGSGAAITWLLGGQFEQISHCINNMIGDVSGIICDGAGSACSMKVSTSTSAAVKSSLMAINNLHVPQSEGIVSDDVDETIANLGRLSKLGMLDTDIEIINIMRAKQQGKAQ.

It belongs to the UPF0597 family.

This is UPF0597 protein ASA_0240 from Aeromonas salmonicida (strain A449).